Here is a 1481-residue protein sequence, read N- to C-terminus: DNA excision repair protein ERCC-6 (1481 aa).

The interval 1 to 506 is N-terminal domain; essential for its chromatin remodeling activity; that stretch reads MFHEEVPNST…GFLFKKLFKY (506 aa). S158 carries the post-translational modification Phosphoserine; by CDK2. At K170 the chain carries N6-methylated lysine; by EHMT2. K256 is covalently cross-linked (Glycyl lysine isopeptide (Lys-Gly) (interchain with G-Cter in SUMO2)). K298 is subject to N6-methylated lysine; by EHMT2. Residues 309 to 452 are disordered; it reads AIETKADQRS…RKVARRQDDG (144 aa). Residues 327 to 337 are compositionally biased toward basic residues; sequence RLKKHSRKLQR. The span at 353–363 shows a compositional bias: basic and acidic residues; sequence KPLEPEVRPEA. Acidic residues-rich tracts occupy residues 378–390 and 420–435; these read DGEE…EEEG and EIDD…EDEA. Phosphoserine is present on residues S428 and S429. K444 is modified (N6-methylated lysine; by EHMT2). A phosphoserine mark is found at S482 and S485. Residues 515–691 form the Helicase ATP-binding domain; that stretch reads WELHCQQAGG…WSLFDFIFPG (177 aa). 528-535 is an ATP binding site; that stretch reads DEMGLGKT. The DEAH box motif lies at 642–645; it reads DEGH. The Helicase C-terminal domain maps to 839 to 998; that stretch reads VVESLLKIWH…RRFFKSNDLY (160 aa). 3 disordered regions span residues 1040–1096, 1114–1238, and 1307–1372; these read LGTD…NRAS, SVMS…DRSS, and GHRG…GAPS. An N6-methylated lysine; by EHMT2 modification is found at K1047. A compositionally biased stretch (polar residues) spans 1138 to 1147; the sequence is ASTSEKQGSS. A compositionally biased stretch (basic residues) spans 1192–1201; it reads QPKQKAKNSK. The span at 1202 to 1212 shows a compositional bias: basic and acidic residues; the sequence is HCRDAKFEGTR. Residues 1330 to 1345 are compositionally biased toward polar residues; that stretch reads LPVQHPSSLTEKTQNN. A compositionally biased stretch (basic and acidic residues) spans 1346–1364; sequence MKKEGKAHTPEHFSGKEDG. A CSA-interacting motif (CIM) motif is present at residues 1373–1385; it reads SSSLLARMRARNH. The segment at 1387 to 1416 is ubiquitin-binding domain (UBD); that stretch reads ILPERLESDSEHLAEAAAVPPCGTEHDDLL. The interval 1417 to 1481 is winged-helix domain (WHD); the sequence is VDMRNFIAFQ…GIWKLKPEYC (65 aa). Positions 1434-1481 are essential for its interaction with RNA polymerase II, transcription-coupled nucleotide excision repair activity, association with chromatin after UV irradiation and for mediating the UV-induced translocation of ERRC8 to the nuclear matrix; it reads STQEILQEFESKLSVAQSCVFRELLRNLCNFHRTPGGEGIWKLKPEYC.

Belongs to the SNF2/RAD54 helicase family. As to quaternary structure, homodimer. Binds DNA. Interacts with ERCC8. Interacts with RNA polymerase II; interaction is enhanced by UV irradiation. Component of the B-WICH complex, at least composed of SMARCA5/SNF2H, BAZ1B/WSTF, SF3B1, DEK, MYO1C, ERCC6, MYBBP1A and DDX21. Interacts with KIAA1530/UVSSA. Interacts with ELOA and CUL5; the interaction is induced by DNA damaging agents or by inhibitors of RNA polymerase II elongation. Interacts (via WHD region) with RIF1. Interacts with SMARCC2/BAF170, SMARCB1/BAF47 and the neuron-specific chromatin remodeling complex (nBAF complex). Interacts with ERCC5/XPG (via C-terminus); the interaction stimulates ERCC6/CSB binding to DNA repair bubble and ERCC6/CSB ATPase activity. May form a complex composed of RNA polymerase II, ERCC6/CSB and ERCC5/XPG which associates with the DNA repair bubble during transcription-coupled nucleotide excision repair. Interacts with CAND1, CSTF1, DDX3X, DDX5, DDX17, DDX23, DHX36, HDAC1, HNRNPU, MTA2, PRPF3, PSMD3, RBBP4, SFPQ, SMARCA1, SMARCA2, TOP1, USP7 and XRCC5. Post-translationally, phosphorylated in a cell cycle-dependent manner at Ser-158 by cyclin A-CDK2 in response to DNA damage. Phosphorylation at this site promotes the intramolecular interaction of the N-terminal domain with the helicase ATP-binding domain, thereby probably releasing the inhibitory effect of the N-terminal domain on its ATPase activity. Phosphorylation is essential for its chromatin remodeling activity. Ubiquitinated at the C-terminus. Ubiquitination by the CSA complex leads to ERCC6 proteasomal degradation in a UV-dependent manner. Stabilized following interaction with KIAA1530/UVSSA, which promotes recruitment of deubiquitinating enzyme USP7, leading to deubiquitination of ERCC6 thereby preventing UV-induced degradation of ERCC6 by the proteasome.

Its subcellular location is the nucleus. The protein localises to the chromosome. The catalysed reaction is ATP + H2O = ADP + phosphate + H(+). Functionally, essential factor involved in transcription-coupled nucleotide excision repair (TC-NER), a process during which RNA polymerase II-blocking lesions are rapidly removed from the transcribed strand of active genes. Plays a central role in the initiation of the TC-NER process: specifically recognizes and binds RNA polymerase II stalled at a lesion, and mediates recruitment of ERCC8/CSA, initiating DNA damage excision by TFIIH recruitment. Upon DNA-binding, it locally modifies DNA conformation by wrapping the DNA around itself, thereby modifying the interface between stalled RNA polymerase II and DNA. Acts as a chromatin remodeler at DSBs; DNA-dependent ATPase-dependent activity is essential for this function. Plays an important role in regulating the choice of the DNA double-strand breaks (DSBs) repair pathway and G2/M checkpoint activation; DNA-dependent ATPase activity is essential for this function. Regulates the DNA repair pathway choice by inhibiting non-homologous end joining (NHEJ), thereby promoting the homologous recombination (HR)-mediated repair of DSBs during the S/G2 phases of the cell cycle. Mediates the activation of the ATM- and CHEK2-dependent DNA damage responses thus preventing premature entry of cells into mitosis following the induction of DNA DSBs. Remodels chromatin by evicting histones from chromatin flanking DSBs, limiting RIF1 accumulation at DSBs thereby promoting BRCA1-mediated HR. Required for stable recruitment of ELOA and CUL5 to DNA damage sites. Also involved in UV-induced translocation of ERCC8 to the nuclear matrix. Essential for neuronal differentiation and neuritogenesis; regulates transcription and chromatin remodeling activities required during neurogenesis. The sequence is that of DNA excision repair protein ERCC-6 (Ercc6) from Mus musculus (Mouse).